The chain runs to 328 residues: Malate dehydrogenase (328 aa).

12–18 contributes to the NAD(+) binding site; that stretch reads GAAGQIG. Substrate contacts are provided by Arg-95 and Arg-101. NAD(+) contacts are provided by residues Asn-108, Gln-115, and 132-134; that span reads VGN. 2 residues coordinate substrate: Asn-134 and Arg-165. Residue His-190 is the Proton acceptor of the active site.

Belongs to the LDH/MDH superfamily. MDH type 2 family.

The enzyme catalyses (S)-malate + NAD(+) = oxaloacetate + NADH + H(+). Functionally, catalyzes the reversible oxidation of malate to oxaloacetate. The sequence is that of Malate dehydrogenase from Leptothrix cholodnii (strain ATCC 51168 / LMG 8142 / SP-6) (Leptothrix discophora (strain SP-6)).